The primary structure comprises 434 residues: tRNA dimethylallyltransferase (434 aa).

Position 10–17 (10–17 (GTTGAGKS)) interacts with ATP. Residue 12–17 (TGAGKS) coordinates substrate. Interaction with substrate tRNA stretches follow at residues 35-38 (DSMQ) and 166-170 (RKIRR). Positions 211 to 233 (SLVLMPRLDKRVDKMLSHGLVDE) are interaction with isopentenylpyrophosphate transferase. 3 interaction with substrate tRNA regions span residues 256–258 (QCI), 281–299 (RMKV…WIQS), and 291–298 (KSQKKWIQ). The segment at 380–416 (FVCEECLDKRGDPFTVIGEDAFNVHIKSRKHKTTVRR) adopts a Matrin-type zinc-finger fold.

Belongs to the IPP transferase family.

The protein resides in the mitochondrion. Its subcellular location is the cytoplasm. It localises to the nucleus. The catalysed reaction is adenosine(37) in tRNA + dimethylallyl diphosphate = N(6)-dimethylallyladenosine(37) in tRNA + diphosphate. Its function is as follows. Catalyzes the transfer of a dimethylallyl group onto the adenine at position 37 of both cytosolic and mitochondrial tRNAs, leading to the formation of N6-(dimethylallyl)adenosine (i(6)A). This chain is tRNA dimethylallyltransferase (tit1), found in Schizosaccharomyces pombe (strain 972 / ATCC 24843) (Fission yeast).